Here is a 320-residue protein sequence, read N- to C-terminus: Cytochrome f (320 aa).

The N-terminal stretch at 1–35 (MQTRNTFSWIKEEITRSISVSLMIYIITGASISNA) is a signal peptide. The heme site is built by tyrosine 36, cysteine 56, cysteine 59, and histidine 60. The helical transmembrane segment at 286–306 (VQGLLFFLASIVFAQIFLVLK) threads the bilayer.

The protein belongs to the cytochrome f family. In terms of assembly, the 4 large subunits of the cytochrome b6-f complex are cytochrome b6, subunit IV (17 kDa polypeptide, petD), cytochrome f and the Rieske protein, while the 4 small subunits are PetG, PetL, PetM and PetN. The complex functions as a dimer. It depends on heme as a cofactor.

The protein resides in the plastid. It is found in the chloroplast thylakoid membrane. In terms of biological role, component of the cytochrome b6-f complex, which mediates electron transfer between photosystem II (PSII) and photosystem I (PSI), cyclic electron flow around PSI, and state transitions. This is Cytochrome f from Gossypium barbadense (Sea Island cotton).